The chain runs to 154 residues: Myoglobin (154 aa).

A Globin domain is found at 2-148 (GLSEGEWQLV…FRKDIAAKYK (147 aa)). A Phosphoserine modification is found at serine 4. A nitrite-binding site is contributed by histidine 65. Histidine 65 lines the O2 pocket. At threonine 68 the chain carries Phosphothreonine. Histidine 94 contributes to the heme b binding site.

Monomer.

It localises to the cytoplasm. Its subcellular location is the sarcoplasm. It catalyses the reaction Fe(III)-heme b-[protein] + nitric oxide + H2O = Fe(II)-heme b-[protein] + nitrite + 2 H(+). The enzyme catalyses H2O2 + AH2 = A + 2 H2O. In terms of biological role, monomeric heme protein which primary function is to store oxygen and facilitate its diffusion within muscle tissues. Reversibly binds oxygen through a pentacoordinated heme iron and enables its timely and efficient release as needed during periods of heightened demand. Depending on the oxidative conditions of tissues and cells, and in addition to its ability to bind oxygen, it also has a nitrite reductase activity whereby it regulates the production of bioactive nitric oxide. Under stress conditions, like hypoxia and anoxia, it also protects cells against reactive oxygen species thanks to its pseudoperoxidase activity. This is Myoglobin (MB) from Delphinapterus leucas (Beluga whale).